The chain runs to 400 residues: General L-amino acid transport system permease protein AapQ (400 aa).

A run of 8 helical transmembrane segments spans residues 29-49 (SIFYQILTIVILVGFVWWVAH), 100-120 (LLVAVTGIFTATIIGFLIGIG), 142-162 (IPPLLVIFFWYLGVLSVLPQP), 188-208 (TGMIAVGIALVIAIVASIIIA), 225-245 (VWTAIALIVGLPLLVFVVSGF), 264-284 (VVGPEFMSLFLALSFYTASFI), 340-360 (NSSLAIAIGFSDLVAVGGTIL), and 367-387 (IEIVCIWGIVYLSLSILTSLF). Positions 96–388 (ILNTLLVAVT…SLSILTSLFM (293 aa)) constitute an ABC transmembrane type-1 domain.

It belongs to the binding-protein-dependent transport system permease family. HisMQ subfamily.

Its subcellular location is the cell inner membrane. In terms of biological role, part of a binding-protein-dependent transport system for L-amino acids, affects the uptake as well as efflux of these amino acids. Probably responsible for the translocation of the substrate across the membrane. This chain is General L-amino acid transport system permease protein AapQ (aapQ), found in Rhizobium johnstonii (strain DSM 114642 / LMG 32736 / 3841) (Rhizobium leguminosarum bv. viciae).